Reading from the N-terminus, the 158-residue chain is MAFCNKLGGLLRQNISSNGNVPVTSMLGSLRLMSTKLFIGGLSWGTDDASLRDAFAHFGDVVDAKVIVDRETGRSRGFGFVNFNDEGAATAAISEMDGKELNGRHIRVNPANDRPSAPRAYGGGGGYSGGGGGYGGGGGGYGGGGGGYGGGGDGGGGF.

Residues 1–34 constitute a mitochondrion transit peptide; it reads MAFCNKLGGLLRQNISSNGNVPVTSMLGSLRLMS. An RRM domain is found at 35–113; that stretch reads TKLFIGGLSW…RHIRVNPAND (79 aa). Ser43 is subject to Phosphoserine. The segment at 122–157 is glycine-rich (GR) required for cell-to-cell movement; the sequence is GGGGGYSGGGGGYGGGGGGYGGGGGGYGGGGDGGGG.

Belongs to the GR-RBP family. As to quaternary structure, binds to small phloem-mobile single-stranded RNAs (ss-sRNA, e.g. small interfering RNA (siRNA) and microRNA (miRNA)) in the phloeme exudate, including viral-derived sRNA (vsiRNA). Interacts with ORRM2, RBG3/ORRM3 and RBG5/ORRM4.

It localises to the mitochondrion. The protein resides in the secreted. In terms of biological role, promotes the cis-splicing and editing of several mitochondrial RNAs (including NAD5 transcripts). Plays a role in RNA transcription or processing during stress. Binds RNAs and DNAs sequence with a preference to single-stranded nucleic acids. Displays strong affinity to poly(U) sequence. Exerts cold and freezing tolerance, probably by exhibiting an RNA chaperone activity during the cold and freezing adaptation process. Mediates cell-to-cell trafficking of RNA interference (RNAi) signals (small RNAs (sRNA), e.g. small interfering RNA (siRNA) and microRNA (miRNA)) which regulate growth and development, as well as responses to environmental inputs, including pathogen attack; can compromise zucchini yellow mosaic virus (ZYMV) and tobacco rattle virus (TRV) infections at the early stage. The polypeptide is Glycine-rich RNA-binding protein 2, mitochondrial (Arabidopsis thaliana (Mouse-ear cress)).